We begin with the raw amino-acid sequence, 230 residues long: C-reactive protein (230 aa).

A signal peptide spans 1–19 (MEKLLWCLLITISFSQAFG). One can recognise a Pentraxin (PTX) domain in the interval 24–223 (SKQAFVFPGV…DVFIKPQLWP (200 aa)). A disulfide bridge links Cys55 with Cys114. Asn78 contributes to the Ca(2+) binding site. Asn147 carries N-linked (GlcNAc...) asparagine glycosylation. Ca(2+)-binding residues include Glu155, Gln156, Asp157, and Gln167. A disulfide bridge links Cys227 with Cys228.

It belongs to the pentraxin family. Homopentamer; disulfide-linked. Pentraxin (or pentaxin) have a discoid arrangement of 5 non-covalently bound subunits. Two of the five chains form a dimer linked by two interchain disulfide bonds located in the C-terminal heptapeptide and specific to rat CRP. Interacts with FCN1; may regulate monocyte activation by FCN1. It depends on Ca(2+) as a cofactor. Post-translationally, the last two cysteines are involved either in interchain disulfide bonds or in an intrachain bond. Found in plasma.

The protein localises to the secreted. Displays several functions associated with host defense: it promotes agglutination, bacterial capsular swelling, phagocytosis and complement fixation through its calcium-dependent binding to phosphorylcholine. Can interact with DNA and histones and may scavenge nuclear material released from damaged circulating cells. The protein is C-reactive protein (Crp) of Rattus norvegicus (Rat).